Reading from the N-terminus, the 71-residue chain is High-potential iron-sulfur protein (71 aa).

Gln-1 bears the Pyrrolidone carboxylic acid mark. Positions 37, 40, 50, and 64 each coordinate [4Fe-4S] cluster.

This sequence belongs to the high-potential iron-sulfur protein (HiPIP) family. Homodimer.

Functionally, specific class of high-redox-potential 4Fe-4S ferredoxins. Functions in anaerobic electron transport in most purple and in some other photosynthetic bacteria and in at least one genus (Paracoccus) of halophilic, denitrifying bacteria. In Halomonas halodenitrificans (strain ATCC 12084 / NCIMB 8669) (Paracoccus halodenitrificans), this protein is High-potential iron-sulfur protein (hip).